A 221-amino-acid chain; its full sequence is Probable transaldolase (221 aa).

Catalysis depends on K83, which acts as the Schiff-base intermediate with substrate.

The protein belongs to the transaldolase family. Type 3B subfamily.

The protein localises to the cytoplasm. The enzyme catalyses D-sedoheptulose 7-phosphate + D-glyceraldehyde 3-phosphate = D-erythrose 4-phosphate + beta-D-fructose 6-phosphate. The protein operates within carbohydrate degradation; pentose phosphate pathway; D-glyceraldehyde 3-phosphate and beta-D-fructose 6-phosphate from D-ribose 5-phosphate and D-xylulose 5-phosphate (non-oxidative stage): step 2/3. Its function is as follows. Transaldolase is important for the balance of metabolites in the pentose-phosphate pathway. The polypeptide is Probable transaldolase (Petrotoga mobilis (strain DSM 10674 / SJ95)).